We begin with the raw amino-acid sequence, 176 residues long: Inorganic pyrophosphatase (176 aa).

3 residues coordinate substrate: lysine 30, arginine 44, and tyrosine 56. Mg(2+) is bound by residues aspartate 66, aspartate 71, and aspartate 103. Tyrosine 142 contributes to the substrate binding site.

The protein belongs to the PPase family. As to quaternary structure, homohexamer. Mg(2+) serves as cofactor.

It is found in the cytoplasm. The catalysed reaction is diphosphate + H2O = 2 phosphate + H(+). In terms of biological role, catalyzes the hydrolysis of inorganic pyrophosphate (PPi) forming two phosphate ions. The protein is Inorganic pyrophosphatase of Escherichia coli O157:H7.